Here is a 31-residue protein sequence, read N- to C-terminus: Acetyl-CoA carboxylase (31 aa).

The interval 1–31 (RISSSVIAHKTQLDSGKREVYSSHMQLGGPK) is disordered. Basic and acidic residues predominate over residues 11–21 (TQLDSGKREVY).

The enzyme catalyses hydrogencarbonate + acetyl-CoA + ATP = malonyl-CoA + ADP + phosphate + H(+). The protein operates within lipid metabolism; malonyl-CoA biosynthesis; malonyl-CoA from acetyl-CoA: step 1/1. This is Acetyl-CoA carboxylase from Catharanthus roseus (Madagascar periwinkle).